The chain runs to 648 residues: L-aspartate oxidase 2-b, chloroplastic (648 aa).

FAD contacts are provided by residues 98–101, K120, 127–134, and D298; these read SGIA and STNYAQGG. R373 (proton donor/acceptor) is an active-site residue. Residues E458 and 474 to 475 contribute to the FAD site; that span reads SL.

It belongs to the FAD-dependent oxidoreductase 2 family. NadB subfamily. FAD is required as a cofactor.

It is found in the plastid. The protein resides in the chloroplast. The catalysed reaction is L-aspartate + O2 = iminosuccinate + H2O2. It functions in the pathway alkaloid biosynthesis; nicotine biosynthesis. The protein operates within cofactor biosynthesis; NAD(+) biosynthesis; iminoaspartate from L-aspartate (oxidase route): step 1/1. Involved in the biosynthesis of pyridine alkaloid natural products, leading mainly to the production of anabasine, anatabine, nicotine and nornicotine, effective deterrents against herbivores with antiparasitic and pesticide properties (neurotoxins); nornicotine serves as the precursor in the synthesis of the carcinogen compound N'-nitrosonornicotine (NNN). Catalyzes the oxidation of L-aspartate to iminoaspartate. This is L-aspartate oxidase 2-b, chloroplastic from Nicotiana tabacum (Common tobacco).